The sequence spans 207 residues: Large ribosomal subunit protein uL4 (207 aa).

The disordered stretch occupies residues 48 to 78 (THKVKTRSEVRGGGRKPWRQKGTGRARQGSI). Positions 60-71 (GGRKPWRQKGTG) are enriched in basic residues.

This sequence belongs to the universal ribosomal protein uL4 family. As to quaternary structure, part of the 50S ribosomal subunit.

In terms of biological role, one of the primary rRNA binding proteins, this protein initially binds near the 5'-end of the 23S rRNA. It is important during the early stages of 50S assembly. It makes multiple contacts with different domains of the 23S rRNA in the assembled 50S subunit and ribosome. Forms part of the polypeptide exit tunnel. This Bacillus pumilus (strain SAFR-032) protein is Large ribosomal subunit protein uL4.